We begin with the raw amino-acid sequence, 85 residues long: Alpha-insect toxin Bot14 (85 aa).

An N-terminal signal peptide occupies residues 1–18; sequence MSSLMISTAMKGKAPYRQ. An LCN-type CS-alpha/beta domain is found at 20-84; sequence RDGYIAQPHN…GIIVHGEKCH (65 aa). Intrachain disulfides connect cysteine 30/cysteine 83, cysteine 34/cysteine 55, cysteine 41/cysteine 65, and cysteine 45/cysteine 67.

This sequence belongs to the long (4 C-C) scorpion toxin superfamily. Sodium channel inhibitor family. Alpha subfamily. As to expression, expressed by the venom gland.

Its subcellular location is the secreted. Functionally, alpha toxins bind voltage-independently at site-3 of sodium channels (Nav) and inhibit the inactivation of the activated channels, thereby blocking neuronal transmission. This toxin is active only on insects. The polypeptide is Alpha-insect toxin Bot14 (Buthus occitanus tunetanus (Common European scorpion)).